An 88-amino-acid polypeptide reads, in one-letter code: Phosphocarrier protein HPr (88 aa).

The HPr domain maps to 1 to 88 (MKKFQAVIKD…KACLEKNKVI (88 aa)). His-15 (pros-phosphohistidine intermediate) is an active-site residue. Ser-47 bears the Phosphoserine; by HPrK/P mark.

It belongs to the HPr family.

It localises to the cytoplasm. Its activity is regulated as follows. Phosphorylation on Ser-47 inhibits the phosphoryl transfer from enzyme I to HPr. General (non sugar-specific) component of the phosphoenolpyruvate-dependent sugar phosphotransferase system (sugar PTS). This major carbohydrate active-transport system catalyzes the phosphorylation of incoming sugar substrates concomitantly with their translocation across the cell membrane. The phosphoryl group from phosphoenolpyruvate (PEP) is transferred to the phosphoryl carrier protein HPr by enzyme I. Phospho-HPr then transfers it to the PTS EIIA domain. Its function is as follows. P-Ser-HPr interacts with the catabolite control protein A (CcpA), forming a complex that binds to DNA at the catabolite response elements cre, operator sites preceding a large number of catabolite-regulated genes. Thus, P-Ser-HPr is a corepressor in carbon catabolite repression (CCR), a mechanism that allows bacteria to coordinate and optimize the utilization of available carbon sources. P-Ser-HPr also plays a role in inducer exclusion, in which it probably interacts with several non-PTS permeases and inhibits their transport activity. The protein is Phosphocarrier protein HPr (ptsH) of Mycoplasma genitalium (strain ATCC 33530 / DSM 19775 / NCTC 10195 / G37) (Mycoplasmoides genitalium).